Consider the following 397-residue polypeptide: Acetate kinase (397 aa).

Residue Asn7 participates in Mg(2+) binding. Lys14 is a binding site for ATP. Arg90 is a substrate binding site. Asp147 serves as the catalytic Proton donor/acceptor. ATP contacts are provided by residues 207-211, 282-284, and 330-334; these read HLGNG, DFR, and GLGEN. Residue Glu383 participates in Mg(2+) binding.

Belongs to the acetokinase family. In terms of assembly, homodimer. The cofactor is Mg(2+). Mn(2+) serves as cofactor.

The protein resides in the cytoplasm. It carries out the reaction acetate + ATP = acetyl phosphate + ADP. Its pathway is metabolic intermediate biosynthesis; acetyl-CoA biosynthesis; acetyl-CoA from acetate: step 1/2. Catalyzes the formation of acetyl phosphate from acetate and ATP. Can also catalyze the reverse reaction. The protein is Acetate kinase of Clostridium botulinum (strain Okra / Type B1).